A 428-amino-acid chain; its full sequence is Dihydroorotase (428 aa).

Zn(2+)-binding residues include His-59 and His-61. Substrate-binding positions include 61 to 63 and Asn-93; that span reads HFR. Residues Asp-151, His-178, and His-231 each contribute to the Zn(2+) site. Residue Asn-277 coordinates substrate. Zn(2+) is bound at residue Asp-304. Residue Asp-304 is part of the active site. Residues His-308 and 322–323 each bind substrate; that span reads FG.

The protein belongs to the metallo-dependent hydrolases superfamily. DHOase family. Class I DHOase subfamily. Zn(2+) is required as a cofactor.

It carries out the reaction (S)-dihydroorotate + H2O = N-carbamoyl-L-aspartate + H(+). It functions in the pathway pyrimidine metabolism; UMP biosynthesis via de novo pathway; (S)-dihydroorotate from bicarbonate: step 3/3. In terms of biological role, catalyzes the reversible cyclization of carbamoyl aspartate to dihydroorotate. The chain is Dihydroorotase from Bacillus licheniformis (strain ATCC 14580 / DSM 13 / JCM 2505 / CCUG 7422 / NBRC 12200 / NCIMB 9375 / NCTC 10341 / NRRL NRS-1264 / Gibson 46).